We begin with the raw amino-acid sequence, 277 residues long: Orotidine 5'-phosphate decarboxylase (277 aa).

Residues Asp40, 62–64 (KTH), 93–102 (DRKFIDIGNT), Tyr229, and Arg247 contribute to the substrate site. The active-site Proton donor is the Lys95.

Belongs to the OMP decarboxylase family.

The enzyme catalyses orotidine 5'-phosphate + H(+) = UMP + CO2. Its pathway is pyrimidine metabolism; UMP biosynthesis via de novo pathway; UMP from orotate: step 2/2. The sequence is that of Orotidine 5'-phosphate decarboxylase (pyrG) from Aspergillus kawachii (White koji mold).